The sequence spans 432 residues: Enolase (432 aa).

Gln163 contacts (2R)-2-phosphoglycerate. The active-site Proton donor is the Glu205. 3 residues coordinate Mg(2+): Asp242, Glu289, and Asp316. Residues Lys341, Arg370, Ser371, and Lys392 each coordinate (2R)-2-phosphoglycerate. The Proton acceptor role is filled by Lys341.

The protein belongs to the enolase family. Mg(2+) is required as a cofactor. Probably phosphorylated.

The protein resides in the cytoplasm. It is found in the secreted. It localises to the cell surface. It carries out the reaction (2R)-2-phosphoglycerate = phosphoenolpyruvate + H2O. It functions in the pathway carbohydrate degradation; glycolysis; pyruvate from D-glyceraldehyde 3-phosphate: step 4/5. Its function is as follows. Catalyzes the reversible conversion of 2-phosphoglycerate (2-PG) into phosphoenolpyruvate (PEP). It is essential for the degradation of carbohydrates via glycolysis. In terms of biological role, 'Moonlights' as a plasminogen receptor. Binds plasminogen and human salivary mucin MG2 when expressed on the bacterial cell surface, potentially allowing the bacterium to acquire surface-associated proteolytic activity that may help the dissemination through oral tissues and entrance into the blood stream. The chain is Enolase from Streptococcus mutans serotype c (strain ATCC 700610 / UA159).